The chain runs to 823 residues: Leucine--tRNA ligase (823 aa).

The 'HIGH' region motif lies at 42 to 52 (PYPSGTLHMGH). The 'KMSKS' region signature appears at 575–579 (KMSKS). Residue Lys-578 participates in ATP binding.

The protein belongs to the class-I aminoacyl-tRNA synthetase family.

Its subcellular location is the cytoplasm. It carries out the reaction tRNA(Leu) + L-leucine + ATP = L-leucyl-tRNA(Leu) + AMP + diphosphate. The sequence is that of Leucine--tRNA ligase from Legionella pneumophila (strain Corby).